The sequence spans 1449 residues: DNA polymerase III PolC-type (1449 aa).

The disordered stretch occupies residues 194–231 (AQEKPVKKESSDNKHKSNGGNKGGYEKKSYKDEPKNEN). Basic and acidic residues-rich tracts occupy residues 197–208 (KPVKKESSDNKH) and 217–229 (GYEK…EPKN). Residues 435–590 (YVVFDIETTG…DDAKATAEIL (156 aa)) enclose the Exonuclease domain.

This sequence belongs to the DNA polymerase type-C family. PolC subfamily.

It is found in the cytoplasm. The enzyme catalyses DNA(n) + a 2'-deoxyribonucleoside 5'-triphosphate = DNA(n+1) + diphosphate. Its function is as follows. Required for replicative DNA synthesis. This DNA polymerase also exhibits 3' to 5' exonuclease activity. This Clostridium perfringens (strain 13 / Type A) protein is DNA polymerase III PolC-type.